Here is a 426-residue protein sequence, read N- to C-terminus: Serine--tRNA ligase (426 aa).

Position 233 to 235 (233 to 235) interacts with L-serine; the sequence is TAE. 264 to 266 contacts ATP; sequence RSE. Glu-287 lines the L-serine pocket. ATP is bound at residue 351–354; it reads EISS. Residue Ser-387 coordinates L-serine.

This sequence belongs to the class-II aminoacyl-tRNA synthetase family. Type-1 seryl-tRNA synthetase subfamily. As to quaternary structure, homodimer. The tRNA molecule binds across the dimer.

The protein resides in the cytoplasm. It catalyses the reaction tRNA(Ser) + L-serine + ATP = L-seryl-tRNA(Ser) + AMP + diphosphate + H(+). It carries out the reaction tRNA(Sec) + L-serine + ATP = L-seryl-tRNA(Sec) + AMP + diphosphate + H(+). It participates in aminoacyl-tRNA biosynthesis; selenocysteinyl-tRNA(Sec) biosynthesis; L-seryl-tRNA(Sec) from L-serine and tRNA(Sec): step 1/1. Catalyzes the attachment of serine to tRNA(Ser). Is also able to aminoacylate tRNA(Sec) with serine, to form the misacylated tRNA L-seryl-tRNA(Sec), which will be further converted into selenocysteinyl-tRNA(Sec). In Azotobacter vinelandii (strain DJ / ATCC BAA-1303), this protein is Serine--tRNA ligase.